Consider the following 134-residue polypeptide: Phosphoribosyl-AMP cyclohydrolase (134 aa).

Asp78 is a Mg(2+) binding site. Cys79 contacts Zn(2+). Mg(2+) is bound by residues Asp80 and Asp82. 2 residues coordinate Zn(2+): Cys96 and Cys103.

The protein belongs to the PRA-CH family. As to quaternary structure, homodimer. Mg(2+) serves as cofactor. The cofactor is Zn(2+).

The protein resides in the cytoplasm. The catalysed reaction is 1-(5-phospho-beta-D-ribosyl)-5'-AMP + H2O = 1-(5-phospho-beta-D-ribosyl)-5-[(5-phospho-beta-D-ribosylamino)methylideneamino]imidazole-4-carboxamide. Its pathway is amino-acid biosynthesis; L-histidine biosynthesis; L-histidine from 5-phospho-alpha-D-ribose 1-diphosphate: step 3/9. In terms of biological role, catalyzes the hydrolysis of the adenine ring of phosphoribosyl-AMP. In Cupriavidus taiwanensis (strain DSM 17343 / BCRC 17206 / CCUG 44338 / CIP 107171 / LMG 19424 / R1) (Ralstonia taiwanensis (strain LMG 19424)), this protein is Phosphoribosyl-AMP cyclohydrolase.